Consider the following 661-residue polypeptide: Transcription factor ccg-8 (661 aa).

Basic residues predominate over residues 1-11; it reads MEHHHHHRHMH. Disordered regions lie at residues 1 to 69, 107 to 243, 255 to 279, and 354 to 398; these read MEHH…QADN, SASS…LDDP, LKTD…DQNQ, and RTKS…RRTS. Low complexity-rich tracts occupy residues 23 to 43 and 107 to 140; these read HQQY…QHQQ and SASS…SSNR. Residues 173–187 are compositionally biased toward polar residues; that stretch reads DHSLPSIASLNVGSS. The segment covering 192-203 has biased composition (pro residues); that stretch reads QPTPTPQPPPKF. A compositionally biased stretch (basic and acidic residues) spans 357-366; it reads SSSDTRESGQ.

Transcription factor that plays a pivotal role in azole adaptive responses by regulating the drug accumulation in the cells. Affects the transcriptional responses to ketoconazole of many genes, including the target gene (erg11), an azole transporter gene (cdr4), a hexose transporter gene (hxt13), a stress response gene (kts-1), two transcription factor genes (named kts-2 and fsd-1/ndt80). Also regulates phospholipid synthesis that is not involved in azole resistance. This chain is Transcription factor ccg-8, found in Neurospora crassa (strain ATCC 24698 / 74-OR23-1A / CBS 708.71 / DSM 1257 / FGSC 987).